A 90-amino-acid polypeptide reads, in one-letter code: Cell division topological specificity factor (90 aa).

It belongs to the MinE family.

In terms of biological role, prevents the cell division inhibition by proteins MinC and MinD at internal division sites while permitting inhibition at polar sites. This ensures cell division at the proper site by restricting the formation of a division septum at the midpoint of the long axis of the cell. This chain is Cell division topological specificity factor, found in Clostridium perfringens (strain SM101 / Type A).